The chain runs to 399 residues: MKPYDLPDARGHFGPYGGVFVAETLMHALDELRAAYDQCRVDPSFIDEFNYELKHFVGRPSPVYHASRWSQRLGGAQIWFKREDLNHTGAHKVNNCIGQALLARRMGKPRVIAETGAGQHGVATATVAARYGMECVVFMGSEDVRRQASNVYRMKLLGATVVPVDSGSCTLKDALNEAMRDWVTNIENTFYIIGTVAGPDPYPRMVRDFQTVIGQECLTQMPEVIGRQPDYVVAAVGGGSNAMGIFHPYIPYENVRLIGVEAAGEGMETGRHAASLAAGQIGVLHGNRTYVMQNADGQVQETHSVSAGLDYPGVGPEHAWLKDSGRAEYAGITDDEALAAFHDCCRIEGIMPALESAHAIAQAVKMTPALSKDKVILVNLSGRGDKDMHTVAERAGLQL.

N6-(pyridoxal phosphate)lysine is present on K92.

This sequence belongs to the TrpB family. Tetramer of two alpha and two beta chains. Pyridoxal 5'-phosphate is required as a cofactor.

The catalysed reaction is (1S,2R)-1-C-(indol-3-yl)glycerol 3-phosphate + L-serine = D-glyceraldehyde 3-phosphate + L-tryptophan + H2O. The protein operates within amino-acid biosynthesis; L-tryptophan biosynthesis; L-tryptophan from chorismate: step 5/5. In terms of biological role, the beta subunit is responsible for the synthesis of L-tryptophan from indole and L-serine. In Bordetella pertussis (strain Tohama I / ATCC BAA-589 / NCTC 13251), this protein is Tryptophan synthase beta chain.